Here is a 172-residue protein sequence, read N- to C-terminus: 5'(3')-deoxyribonucleotidase (172 aa).

The active-site Nucleophile is the Asp-8. Mg(2+) contacts are provided by Asp-8, Asp-10, and Asp-132. Asp-10 functions as the Proton donor in the catalytic mechanism.

The protein belongs to the 5'(3')-deoxyribonucleotidase family. It depends on Mg(2+) as a cofactor.

In terms of biological role, dephosphorylates nucleoside monophosphates such as the 5' and 2'(3')-phosphates of deoxyribonucleotides in vitro. Also catalyzes the dephosphorylation of coenzyme A (CoA), pyridoxal-5'-phosphate (PLP), riboflavine-5-phosphate (FMN) and nicotinamide adenine dinucleotide phosphate (NADP) in vitro. The sequence is that of 5'(3')-deoxyribonucleotidase (yorS) from Bacillus subtilis (strain 168).